The sequence spans 127 residues: Aspartate 1-decarboxylase (127 aa).

Serine 25 acts as the Schiff-base intermediate with substrate; via pyruvic acid in catalysis. Serine 25 bears the Pyruvic acid (Ser) mark. Residue threonine 57 participates in substrate binding. The Proton donor role is filled by tyrosine 58. Residue 73-75 coordinates substrate; that stretch reads GAA.

It belongs to the PanD family. In terms of assembly, heterooctamer of four alpha and four beta subunits. The cofactor is pyruvate. Is synthesized initially as an inactive proenzyme, which is activated by self-cleavage at a specific serine bond to produce a beta-subunit with a hydroxyl group at its C-terminus and an alpha-subunit with a pyruvoyl group at its N-terminus.

The protein localises to the cytoplasm. The enzyme catalyses L-aspartate + H(+) = beta-alanine + CO2. Its pathway is cofactor biosynthesis; (R)-pantothenate biosynthesis; beta-alanine from L-aspartate: step 1/1. Its function is as follows. Catalyzes the pyruvoyl-dependent decarboxylation of aspartate to produce beta-alanine. The chain is Aspartate 1-decarboxylase from Clostridium botulinum (strain Loch Maree / Type A3).